Consider the following 50-residue polypeptide: Large ribosomal subunit protein eL39 (50 aa).

Belongs to the eukaryotic ribosomal protein eL39 family.

The protein is Large ribosomal subunit protein eL39 (rpl39e) of Archaeoglobus fulgidus (strain ATCC 49558 / DSM 4304 / JCM 9628 / NBRC 100126 / VC-16).